Consider the following 267-residue polypeptide: Phosphatidylcholine synthase (267 aa).

Over 1–42 (MILWRIVRPGAAMAYVQTGLVLIAEAMDTQQDSLKPRPAMRA) the chain is Cytoplasmic. Residues 43–63 (AAFSVHVFTAFGAAIALLAML) traverse the membrane as a helical segment. Over 64-69 (EAVREH) the chain is Periplasmic. The chain crosses the membrane as a helical span at residues 70–90 (WAAMFQWLGVALIIDAIDGPI). The Cytoplasmic portion of the chain corresponds to 91–102 (ARRLDVKNVQPN). The chain crosses the membrane as a helical span at residues 103 to 123 (WSGDVLDLVVDFVTYVFVPAY). Residue alanine 124 is a topological domain, periplasmic. A helical transmembrane segment spans residues 125-145 (IVASGLLLPVAAPLLGVAIIV). Over 146–162 (TSALYFADLRMKADDNH) the chain is Cytoplasmic. Residues 163–183 (FRGFPALWNAAAFYLFLLHWP) traverse the membrane as a helical segment. Position 184 (proline 184) is a topological domain, periplasmic. A helical membrane pass occupies residues 185 to 205 (LWSTLLVAALVVLTFVPFHVL). The Cytoplasmic segment spans residues 206–215 (HPVRVVRLRW). A helical transmembrane segment spans residues 216–236 (LTMSLIGIWAVLSLYTLDMDF). Residues 237–239 (RVG) are Periplasmic-facing. Residues 240-260 (PGVTLALCAIALWISFSDALI) traverse the membrane as a helical segment. The Cytoplasmic segment spans residues 261-267 (RFARSFA).

Belongs to the CDP-alcohol phosphatidyltransferase class-I family. It depends on Mn(2+) as a cofactor.

The protein resides in the cell inner membrane. The catalysed reaction is a CDP-1,2-diacyl-sn-glycerol + choline = a 1,2-diacyl-sn-glycero-3-phosphocholine + CMP + H(+). In terms of biological role, condenses choline with CDP-diglyceride to produce phosphatidylcholine and CMP. This chain is Phosphatidylcholine synthase, found in Bradyrhizobium diazoefficiens (strain JCM 10833 / BCRC 13528 / IAM 13628 / NBRC 14792 / USDA 110).